Reading from the N-terminus, the 677-residue chain is Pannexin-2 (677 aa).

Topologically, residues 11-53 are cytoplasmic; it reads MATALLAGEKLRELILPGSQDDKAGALAALLLQLKLELPFDRV. The chain crosses the membrane as a helical span at residues 54–74; it reads VTIGTVLVPILLVTLVFTKNF. Topologically, residues 75–125 are extracellular; it reads AEEPIYCYTPHNFTRDQALYARGYCWTELRDALPGVDASLWPSLFEHKFLP. An N-linked (GlcNAc...) asparagine glycan is attached at Asn-86. A helical transmembrane segment spans residues 126–146; sequence YALLAFAAIMYVPALGWEFLA. At 147–230 the chain is on the cytoplasmic side; the sequence is STRLTSELNF…NFLAKLYLAR (84 aa). A helical transmembrane segment spans residues 231–251; it reads HVLILLLSVVPISYLCTYYAT. The Extracellular segment spans residues 252–295; it reads QKQNEFTCALGASPDGPVGSAGPTVRVSCKLPSVQLQRIIAGVD. Residues 296-316 traverse the membrane as a helical segment; that stretch reads IVLLCFMNLIILVNLIHLFIF. Residues 317-617 are Cytoplasmic-facing; sequence RKSNFIFDKL…LGKADPLTIL (301 aa). Polar residues predominate over residues 394-408; sequence TTPTVRDSGIQTVDP. Disordered regions lie at residues 394–425 and 485–512; these read TTPT…PVVK and AHHY…HTRH. Residues Ser-593 and Ser-604 each carry the phosphoserine modification.

It belongs to the pannexin family. As to quaternary structure, homoheptameric. Post-translationally, S-palmitoylated in neural stem and progenitor cells. In terms of processing, cleaved by CASP3 and CASP7 during apoptosis. Cleavage has no effect on it function. As to expression, expression is enriched in central nervous system. Expressed in suprabasal layers of skin epidermis. In terms of tissue distribution, more aboundantly expressed in skin.

The protein localises to the cell membrane. It localises to the golgi apparatus membrane. Its subcellular location is the endoplasmic reticulum membrane. It catalyses the reaction ATP(in) = ATP(out). It carries out the reaction chloride(in) = chloride(out). The catalysed reaction is iodide(out) = iodide(in). The enzyme catalyses Na(+)(in) = Na(+)(out). It catalyses the reaction D-gluconate(in) = D-gluconate(out). In terms of biological role, ion channel with a slight anion preference. Also able to release ATP. Plays a role in regulating neurogenesis and apoptosis in keratinocytes. In Mus musculus (Mouse), this protein is Pannexin-2 (Panx2).